The sequence spans 166 residues: MLELDLQIASETPAPDEARFRLWCEMGLRQRSADSELTIRLVDETEGRELNHTWRHKNYATNVLSFPADVPDDMLDIPLLGDLVICVPVVNREAAEQGKSIDAHWAHMVIHGCLHLLGYDHIDDEEAEEMEALERTLLEELGYPDPYADDESADHPHSDTPSKDHE.

Positions 111, 115, and 121 each coordinate Zn(2+). The tract at residues 141–166 is disordered; the sequence is LGYPDPYADDESADHPHSDTPSKDHE. Positions 153–166 are enriched in basic and acidic residues; it reads ADHPHSDTPSKDHE.

Belongs to the endoribonuclease YbeY family. Zn(2+) serves as cofactor.

Its subcellular location is the cytoplasm. Single strand-specific metallo-endoribonuclease involved in late-stage 70S ribosome quality control and in maturation of the 3' terminus of the 16S rRNA. The protein is Endoribonuclease YbeY of Pseudomonas syringae pv. tomato (strain ATCC BAA-871 / DC3000).